We begin with the raw amino-acid sequence, 264 residues long: Thymidylate synthase (264 aa).

Residue R21 participates in dUMP binding. Residue H51 participates in (6R)-5,10-methylene-5,6,7,8-tetrahydrofolate binding. 126–127 (RR) serves as a coordination point for dUMP. The active-site Nucleophile is the C146. DUMP contacts are provided by residues 166–169 (RSAD), N177, and 207–209 (HLY). Position 169 (D169) interacts with (6R)-5,10-methylene-5,6,7,8-tetrahydrofolate. A263 is a (6R)-5,10-methylene-5,6,7,8-tetrahydrofolate binding site.

This sequence belongs to the thymidylate synthase family. Bacterial-type ThyA subfamily. In terms of assembly, homodimer.

The protein localises to the cytoplasm. The enzyme catalyses dUMP + (6R)-5,10-methylene-5,6,7,8-tetrahydrofolate = 7,8-dihydrofolate + dTMP. The protein operates within pyrimidine metabolism; dTTP biosynthesis. In terms of biological role, catalyzes the reductive methylation of 2'-deoxyuridine-5'-monophosphate (dUMP) to 2'-deoxythymidine-5'-monophosphate (dTMP) while utilizing 5,10-methylenetetrahydrofolate (mTHF) as the methyl donor and reductant in the reaction, yielding dihydrofolate (DHF) as a by-product. This enzymatic reaction provides an intracellular de novo source of dTMP, an essential precursor for DNA biosynthesis. The sequence is that of Thymidylate synthase from Pseudomonas aeruginosa (strain LESB58).